Consider the following 87-residue polypeptide: MKQGIHPDYHKVVFMDSSTGFKFISGSTANSAETVEWEDGNTYPLIRVEISSDSHPFYTGKQKFTQADGRVDRFNKKYGFADKNAAK.

This sequence belongs to the bacterial ribosomal protein bL31 family. Type B subfamily. In terms of assembly, part of the 50S ribosomal subunit.

The protein is Large ribosomal subunit protein bL31B of Latilactobacillus sakei subsp. sakei (strain 23K) (Lactobacillus sakei subsp. sakei).